Consider the following 210-residue polypeptide: Large ribosomal subunit protein uL4 (210 aa).

The interval valine 57 to asparagine 78 is disordered.

This sequence belongs to the universal ribosomal protein uL4 family. As to quaternary structure, part of the 50S ribosomal subunit.

Its function is as follows. One of the primary rRNA binding proteins, this protein initially binds near the 5'-end of the 23S rRNA. It is important during the early stages of 50S assembly. It makes multiple contacts with different domains of the 23S rRNA in the assembled 50S subunit and ribosome. In terms of biological role, forms part of the polypeptide exit tunnel. This Desulfovibrio desulfuricans (strain ATCC 27774 / DSM 6949 / MB) protein is Large ribosomal subunit protein uL4.